The chain runs to 116 residues: UPF0482 protein PC1_2049 (116 aa).

The N-terminal stretch at 1-31 is a signal peptide; that stretch reads MNHYSFSSLIRAFIPLSLVIVSAAWQPAALA.

The protein belongs to the UPF0482 family.

The polypeptide is UPF0482 protein PC1_2049 (Pectobacterium carotovorum subsp. carotovorum (strain PC1)).